The chain runs to 375 residues: E3 ubiquitin-protein ligase FANCL (375 aa).

An N-acetylalanine modification is found at alanine 2. The segment at 104–294 (LPPPPQFYSS…KDVLEIDFPA (191 aa)) is UBC-RWD region (URD). Zn(2+) is bound by residues cysteine 307, cysteine 310, cysteine 324, cysteine 329, histidine 334, cysteine 337, cysteine 359, and cysteine 362. An RING-type; degenerate zinc finger spans residues 307 to 363 (CGICYAYQLDGTIPDQVCDNSQCGQPFHQICLYEWLRGLLTSRQSFNIIFGECPYCS).

In terms of assembly, interacts with GGN. Belongs to the multisubunit FA complex composed of FANCA, FANCB, FANCC, FANCE, FANCF, FANCG, FANCL/PHF9 and FANCM. The complex is not found in FA patients. In complex with FANCF, FANCA and FANCG, but not with FANCC, nor FANCE, interacts with HES1; this interaction may be essential for the stability and nuclear localization of FA core complex proteins. Interacts with FANCI. Directly interacts (via the RING-type zinc finger) with UBE2T and UBE2W. Post-translationally, the RING-type zinc finger domain is monoubiquitinated in the presence of UBE2T and UBE2W.

Its subcellular location is the cytoplasm. It localises to the nucleus. It catalyses the reaction S-ubiquitinyl-[E2 ubiquitin-conjugating enzyme]-L-cysteine + [acceptor protein]-L-lysine = [E2 ubiquitin-conjugating enzyme]-L-cysteine + N(6)-ubiquitinyl-[acceptor protein]-L-lysine.. It participates in protein modification; protein ubiquitination. In terms of biological role, ubiquitin ligase protein that mediates monoubiquitination of FANCD2 in the presence of UBE2T, a key step in the DNA damage pathway. Also mediates monoubiquitination of FANCI. May stimulate the ubiquitin release from UBE2W. May be required for proper primordial germ cell proliferation in the embryonic stage, whereas it is probably not needed for spermatogonial proliferation after birth. In Homo sapiens (Human), this protein is E3 ubiquitin-protein ligase FANCL (FANCL).